A 177-amino-acid chain; its full sequence is Transcriptional regulator MET31 (177 aa).

The segment at 95–117 adopts a C2H2-type zinc-finger fold; that stretch reads YSCAKCQLKFSRSSDLRRHEKVH.

As to quaternary structure, interacts with MET4 and MET28.

It is found in the cytoplasm. The protein resides in the nucleus. In terms of biological role, auxiliary transcriptional regulator of sulfur amino acid metabolism. Involved in the transcriptional activation of MET28. The chain is Transcriptional regulator MET31 (MET31) from Saccharomyces cerevisiae (strain ATCC 204508 / S288c) (Baker's yeast).